The chain runs to 337 residues: tRNA N6-adenosine threonylcarbamoyltransferase (337 aa).

Residues His-114 and His-118 each contribute to the Fe cation site. Residues 136–140 (LVSGG), Asp-169, Gly-182, Asp-186, and Asn-275 each bind substrate. Asp-301 serves as a coordination point for Fe cation.

The protein belongs to the KAE1 / TsaD family. Requires Fe(2+) as cofactor.

Its subcellular location is the cytoplasm. The catalysed reaction is L-threonylcarbamoyladenylate + adenosine(37) in tRNA = N(6)-L-threonylcarbamoyladenosine(37) in tRNA + AMP + H(+). Required for the formation of a threonylcarbamoyl group on adenosine at position 37 (t(6)A37) in tRNAs that read codons beginning with adenine. Is involved in the transfer of the threonylcarbamoyl moiety of threonylcarbamoyl-AMP (TC-AMP) to the N6 group of A37, together with TsaE and TsaB. TsaD likely plays a direct catalytic role in this reaction. The polypeptide is tRNA N6-adenosine threonylcarbamoyltransferase (Streptococcus thermophilus (strain ATCC BAA-491 / LMD-9)).